A 114-amino-acid polypeptide reads, in one-letter code: Circadian clock oscillator protein KaiB (114 aa).

It belongs to the KaiB family. In terms of assembly, may undergo a major conformational rearrangment; in the free state forms homooligomers. When bound to KaiC switches to a monomeric thioredoxin-fold (KaiB(fs)). The active oscillator complex is probably KaiC(6):KaiB(6).

Component of the KaiBC clock protein complex, which constitutes the main circadian regulator in cyanobacteria; it may modify the ATPase activity of KaiC. Functionally, may be a metamorphic protein which reversibly switches between an inactive tetrameric fold and a rare, thioredoxin-like monomeric fold (KaiB(fs)). KaiB(fs) binds phospho-KaiC, and perhaps clock output effectors. The polypeptide is Circadian clock oscillator protein KaiB (Prochlorococcus marinus (strain MIT 9211)).